The following is a 214-amino-acid chain: Rac-like GTP-binding protein 2 (214 aa).

14 to 21 (GDGAVGKT) contacts GTP. Positions 36 to 44 (YIPTVFDNF) match the Effector region motif. GTP is bound by residues 61 to 65 (DTAGQ) and 119 to 122 (TKLD).

Belongs to the small GTPase superfamily. Rho family. In terms of processing, may be palmitoylated.

The protein resides in the cytoplasm. Its subcellular location is the membrane. Its function is as follows. Inactive GDP-bound Rho GTPases reside in the cytosol, are found in a complex with Rho GDP-dissociation inhibitors (Rho GDIs), and are released from the GDI protein in order to translocate to membranes upon activation. This is Rac-like GTP-binding protein 2 (RAC2) from Oryza sativa subsp. japonica (Rice).